Here is a 296-residue protein sequence, read N- to C-terminus: Probable cell wall protein PGA41 (296 aa).

An N-terminal signal peptide occupies residues 1 to 18 (MKFTIVLFTLISVTVAAA). Residues 146–212 (IASSTKESSS…ITTISSDSST (67 aa)) show a composition bias toward low complexity. The interval 146–276 (IASSTKESSS…PNSSQTAPGA (131 aa)) is disordered. Over residues 220-245 (QGGGGNSGNNGSNGDGGNDASGGGGV) the composition is skewed to gly residues. 2 N-linked (GlcNAc...) asparagine glycosylation sites follow: Asn-229 and Asn-268. Residues 247–274 (NENEQASSPPSSQSSTNSNQPNSSQTAP) show a composition bias toward low complexity. Residue Gly-275 is the site of GPI-anchor amidated glycine attachment. The propeptide at 276–296 (AANYLSSVSVGTLMILVLGLI) is removed in mature form.

The protein belongs to the IHD1 family. Post-translationally, the GPI-anchor is attached to the protein in the endoplasmic reticulum and serves to target the protein to the cell surface. There, the glucosamine-inositol phospholipid moiety is cleaved off and the GPI-modified mannoprotein is covalently attached via its lipidless GPI glycan remnant to the 1,6-beta-glucan of the outer cell wall layer.

The protein localises to the secreted. It is found in the cell wall. Its subcellular location is the membrane. In terms of biological role, probable GPI-anchored cell wall protein that may be involved in cell wall organization, hyphal growth, as well as in virulence. This chain is Probable cell wall protein PGA41 (PGA41), found in Candida albicans (strain SC5314 / ATCC MYA-2876) (Yeast).